The following is a 436-amino-acid chain: Hydrogenobyrinate a,c-diamide synthase (436 aa).

Residues 244 to 435 form the GATase cobBQ-type domain; sequence RIAVARDDAF…MHVIDFSGEA (192 aa). Cysteine 327 functions as the Nucleophile in the catalytic mechanism.

Belongs to the CobB/CbiA family. It depends on Mg(2+) as a cofactor.

It catalyses the reaction hydrogenobyrinate + 2 L-glutamine + 2 ATP + 2 H2O = hydrogenobyrinate a,c-diamide + 2 L-glutamate + 2 ADP + 2 phosphate + 2 H(+). Its pathway is cofactor biosynthesis; adenosylcobalamin biosynthesis; cob(II)yrinate a,c-diamide from precorrin-2 (aerobic route): step 9/10. In terms of biological role, catalyzes the ATP-dependent amidation of the two carboxylate groups at positions a and c of hydrogenobyrinate, using either L-glutamine or ammonia as the nitrogen source. In Brucella abortus biovar 1 (strain 9-941), this protein is Hydrogenobyrinate a,c-diamide synthase.